The sequence spans 74 residues: Small integral membrane protein 15 (74 aa).

The chain crosses the membrane as a helical span at residues 20–40 (YGFLTTVILVLTPLFIISAAL). Positions 48–74 (IETREREQKKKRKRQENIVKAKRAKKD) form a coiled coil. The tract at residues 53–74 (REQKKKRKRQENIVKAKRAKKD) is disordered. Positions 56 to 74 (KKKRKRQENIVKAKRAKKD) are enriched in basic residues.

The protein belongs to the SMIM15 family.

The protein localises to the membrane. This chain is Small integral membrane protein 15 (SMIM15), found in Gallus gallus (Chicken).